The following is a 487-amino-acid chain: Galactose-1-phosphate uridylyltransferase (487 aa).

Belongs to the galactose-1-phosphate uridylyltransferase type 2 family.

The protein resides in the cytoplasm. The enzyme catalyses alpha-D-galactose 1-phosphate + UDP-alpha-D-glucose = alpha-D-glucose 1-phosphate + UDP-alpha-D-galactose. The protein operates within carbohydrate metabolism; galactose metabolism. The polypeptide is Galactose-1-phosphate uridylyltransferase (Lactiplantibacillus plantarum (strain ATCC BAA-793 / NCIMB 8826 / WCFS1) (Lactobacillus plantarum)).